Reading from the N-terminus, the 205-residue chain is Adenylyl-sulfate kinase (205 aa).

31–38 (GLSGAGKS) provides a ligand contact to ATP. Residue Ser105 is the Phosphoserine intermediate of the active site.

The protein belongs to the APS kinase family.

It catalyses the reaction adenosine 5'-phosphosulfate + ATP = 3'-phosphoadenylyl sulfate + ADP + H(+). It functions in the pathway sulfur metabolism; hydrogen sulfide biosynthesis; sulfite from sulfate: step 2/3. Functionally, catalyzes the synthesis of activated sulfate. In Shewanella baltica (strain OS195), this protein is Adenylyl-sulfate kinase.